The following is a 54-amino-acid chain: UPF0391 membrane protein PFL_0093 (54 aa).

2 helical membrane passes run 4-24 and 29-49; these read WAITFLIIAIVAAVLGFGGIA and GIAKILFVVFLVMFIASFFFG.

The protein belongs to the UPF0391 family.

The protein resides in the cell membrane. The sequence is that of UPF0391 membrane protein PFL_0093 from Pseudomonas fluorescens (strain ATCC BAA-477 / NRRL B-23932 / Pf-5).